Reading from the N-terminus, the 535-residue chain is uncharacterized protein (535 aa).

WD repeat units follow at residues 189-226 (RDDFYTSLLSWSPKGDLAIGLAENIYLWSKELGPTRVL), 228-267 (ESIYDVSSVAYSYNGDILAVGRVDGTLQFWQDNERVPRIS), 269-314 (HHPG…AVLV), 320-359 (AHDEQVCGLTWNHDGSQFASGGNDNRVCLFKGSDLRQPLY), 362-404 (QQNA…KIDE), and 462-505 (VHSV…SWHN).

This sequence belongs to the WD repeat CDC20/Fizzy family.

This is an uncharacterized protein from Schizosaccharomyces pombe (strain 972 / ATCC 24843) (Fission yeast).